The following is a 514-amino-acid chain: Bifunctional purine biosynthesis protein PurH (514 aa).

Residues 1 to 145 (MIKRALISVS…KNYQDVAVIV (145 aa)) enclose the MGS-like domain.

The protein belongs to the PurH family.

It carries out the reaction (6R)-10-formyltetrahydrofolate + 5-amino-1-(5-phospho-beta-D-ribosyl)imidazole-4-carboxamide = 5-formamido-1-(5-phospho-D-ribosyl)imidazole-4-carboxamide + (6S)-5,6,7,8-tetrahydrofolate. The catalysed reaction is IMP + H2O = 5-formamido-1-(5-phospho-D-ribosyl)imidazole-4-carboxamide. It participates in purine metabolism; IMP biosynthesis via de novo pathway; 5-formamido-1-(5-phospho-D-ribosyl)imidazole-4-carboxamide from 5-amino-1-(5-phospho-D-ribosyl)imidazole-4-carboxamide (10-formyl THF route): step 1/1. Its pathway is purine metabolism; IMP biosynthesis via de novo pathway; IMP from 5-formamido-1-(5-phospho-D-ribosyl)imidazole-4-carboxamide: step 1/1. This chain is Bifunctional purine biosynthesis protein PurH, found in Ruminiclostridium cellulolyticum (strain ATCC 35319 / DSM 5812 / JCM 6584 / H10) (Clostridium cellulolyticum).